Here is a 253-residue protein sequence, read N- to C-terminus: Prepilin leader peptidase/N-methyltransferase (253 aa).

A helical transmembrane segment spans residues Val-4–Ile-24. Residues Cys-48, Cys-51, Cys-73, and Cys-76 each contribute to the Zn(2+) site. 6 helical membrane-spanning segments follow: residues Ile-80–Trp-100, Val-106–Phe-126, Met-129–Gln-149, Ile-159–Phe-179, Thr-198–Ile-218, and Cys-230–Ile-250.

Belongs to the peptidase A24 family. Requires Zn(2+) as cofactor.

Its subcellular location is the cell inner membrane. It carries out the reaction Typically cleaves a -Gly-|-Phe- bond to release an N-terminal, basic peptide of 5-8 residues from type IV prepilin, and then N-methylates the new N-terminal amino group, the methyl donor being S-adenosyl-L-methionine.. Its function is as follows. Plays an essential role in type IV pili and type II pseudopili formation by proteolytically removing the leader sequence from substrate proteins and subsequently monomethylating the alpha-amino group of the newly exposed N-terminal phenylalanine. The sequence is that of Prepilin leader peptidase/N-methyltransferase (tcpJ) from Vibrio cholerae serotype O1 (strain ATCC 39315 / El Tor Inaba N16961).